Here is a 355-residue protein sequence, read N- to C-terminus: 6-aminohexanoate-oligomer endohydrolase (355 aa).

T267 (nucleophile) is an active-site residue.

The protein belongs to the peptidase S58 family. In terms of assembly, heterotetramer composed of 4 alpha/beta heterodimers. Exists at the monomer/dimer/trimer equilibrium in aqueous solution. Expressed as an inactive precursor that is cleaved autocatalytically at Asn266/Thr267 to generate an active enzyme composed of an alpha subunit and a beta subunit.

The catalysed reaction is [N-(6-aminohexanoyl)]n + H2O = [N-(6-aminohexanoyl)]n-x + [N-(6-aminohexanoyl)]x.. It functions in the pathway xenobiotic degradation; nylon-6 oligomer degradation. Involved in the degradation of nylon-6 oligomers. Degrades cyclic and linear oligomers of 6-aminohexanoate (Ahx) with a degree of polymerization greater than three by an endo-type mode. Cannot use Ahx cyclic dimer or the Ahx linear dimer. The sequence is that of 6-aminohexanoate-oligomer endohydrolase from Paenarthrobacter ureafaciens.